Reading from the N-terminus, the 657-residue chain is Interferon-induced GTP-binding protein Mx1 (657 aa).

Met1 carries the N-acetylmethionine modification. One can recognise a Dynamin-type G domain in the interval 63-336; it reads DLALPAIAVI…LITHICKTLP (274 aa). The segment at 73–80 is G1 motif; the sequence is GDQSSGKS. 73–80 provides a ligand contact to GTP; sequence GDQSSGKS. Residues 98-100 form a G2 motif region; that stretch reads VTR. A G3 motif region spans residues 174 to 177; sequence DLPG. Residues 174–178 and 243–246 each bind GTP; these read DLPGI and TKPD. Residues 243–246 form a G4 motif region; the sequence is TKPD. The tract at residues 275–278 is G5 motif; that stretch reads KCRG. The tract at residues 337 to 362 is bundle signaling element (BSE); that stretch reads LLENQIKENHEKITEELQKYGSDVPE. A middle domain region spans residues 362 to 529; that stretch reads EDEHEKMFFL…HFQMEQIVYC (168 aa). Residues 363–627 form a stalk region; it reads DEHEKMFFLI…KDTYSWLLKE (265 aa). The segment covering 540-551 has biased composition (basic and acidic residues); sequence RVREKDSDEEKK. The disordered stretch occupies residues 540–559; it reads RVREKDSDEEKKKKTSSMSH. The segment at 550 to 553 is critical for lipid-binding; that stretch reads KKKK. Residues 569 to 657 enclose the GED domain; it reads LSEILEHLLA…ARRRLAKFPG (89 aa).

It belongs to the TRAFAC class dynamin-like GTPase superfamily. Dynamin/Fzo/YdjA family. As to quaternary structure, homooligomer. Oligomerizes into multimeric filamentous or ring-like structures by virtue of its stalk domain. Oligomerization is critical for GTPase activity, protein stability, and recognition of viral target structures. Interacts with TRPC1, TRPC3, TRPC4, TRPC5, TRPC6 and TRPC7. Interacts with HSPA5. Interacts with TUBB/TUBB5. Interacts with DDX39A and DDX39B. In terms of processing, ISGylated.

It is found in the cytoplasm. It localises to the endoplasmic reticulum membrane. The protein localises to the perinuclear region. Interferon-induced dynamin-like GTPase with antiviral activity. The polypeptide is Interferon-induced GTP-binding protein Mx1 (MX1) (Canis lupus familiaris (Dog)).